The following is a 309-amino-acid chain: Thiamine-monophosphate kinase (309 aa).

Residues aspartate 41 and aspartate 55 each coordinate Mg(2+). Histidine 62 is a substrate binding site. Mg(2+)-binding residues include aspartate 83, aspartate 128, and aspartate 215. 127 to 128 (GD) contributes to the ATP binding site. Residue serine 217 participates in ATP binding. Aspartate 218 lines the Mg(2+) pocket. Position 268 (glutamate 268) interacts with substrate.

This sequence belongs to the thiamine-monophosphate kinase family.

The enzyme catalyses thiamine phosphate + ATP = thiamine diphosphate + ADP. Its pathway is cofactor biosynthesis; thiamine diphosphate biosynthesis; thiamine diphosphate from thiamine phosphate: step 1/1. Catalyzes the ATP-dependent phosphorylation of thiamine-monophosphate (TMP) to form thiamine-pyrophosphate (TPP), the active form of vitamin B1. In Methanopyrus kandleri (strain AV19 / DSM 6324 / JCM 9639 / NBRC 100938), this protein is Thiamine-monophosphate kinase.